A 345-amino-acid chain; its full sequence is Ferrochelatase (345 aa).

Fe cation contacts are provided by His-215 and Glu-296.

This sequence belongs to the ferrochelatase family.

It localises to the cytoplasm. The catalysed reaction is heme b + 2 H(+) = protoporphyrin IX + Fe(2+). The protein operates within porphyrin-containing compound metabolism; protoheme biosynthesis; protoheme from protoporphyrin-IX: step 1/1. In terms of biological role, catalyzes the ferrous insertion into protoporphyrin IX. This is Ferrochelatase from Rhodopseudomonas palustris (strain ATCC BAA-98 / CGA009).